The chain runs to 98 residues: MNAERLMQVILAPIVTEKATFVAEKNQQVAFRVVADATKPEIKAAVELLFKVQVESVQVLNRKGKVKRFGRFVGRRRNERKAYVALKDGQEIDFAEVK.

It belongs to the universal ribosomal protein uL23 family. In terms of assembly, part of the 50S ribosomal subunit. Contacts protein L29, and trigger factor when it is bound to the ribosome.

One of the early assembly proteins it binds 23S rRNA. One of the proteins that surrounds the polypeptide exit tunnel on the outside of the ribosome. Forms the main docking site for trigger factor binding to the ribosome. The protein is Large ribosomal subunit protein uL23 of Bordetella bronchiseptica (strain ATCC BAA-588 / NCTC 13252 / RB50) (Alcaligenes bronchisepticus).